A 161-amino-acid polypeptide reads, in one-letter code: Carboxysome assembly protein CcmN (161 aa).

A disordered region spans residues 111–140 (LLSAETPPTTATVSSSEPAGRSPQSSAIAH). A compositionally biased stretch (polar residues) spans 116 to 137 (TPPTTATVSSSEPAGRSPQSSA). Residues 144 to 161 (VYGKEQFLRMRQSMFPDR) carry the Encapsulation peptide motif.

This sequence belongs to the CcmN family. As to quaternary structure, interacts with CcmM via the N-terminus of CcmN. Interacts with CcmK2 via the 18 C-terminal residues.

It is found in the carboxysome. Its function is as follows. Required for carboxysome formation; the N-terminus interacts with CcmM which itself binds RuBisCO (ribulose bisphosphate carboxylase, rbcL-rbcS), while the C-terminal 18 residues interact with carboxysome shell protein CcmK2. Required for growth in normal air. In terms of biological role, beta-carboxysome assembly initiates when soluble RuBisCO is condensed into a liquid matrix in a pre-carboxysome by the RbcS-like domains of probably both CcmM58 and CcmM35. CcmN interacts with the N-terminus of CcmM58, and then recruits the CcmK2 major shell protein via CcmN's encapsulation peptide. Shell formation requires CcmK proteins and CcmO. CcmL caps the otherwise elongated carboxysome. Once fully encapsulated carboxysomes are formed, they migrate within the cell probably via interactions with the cytoskeleton. The polypeptide is Carboxysome assembly protein CcmN (Synechococcus elongatus (strain ATCC 33912 / PCC 7942 / FACHB-805) (Anacystis nidulans R2)).